Reading from the N-terminus, the 517-residue chain is MKAILYVIVAVIALILGGAAGVAGGYYWFERESRKKLNSAEARARHIVDEALREAEAKKKEAILEAKEEVHRLRTEAERELKERRAELQRLERRVLQKEEQLDRKVEQLERKEETLSRKERELDRKNQQAQELVNKQMAELERISQLTMEEARELFLKQVEQEARADAAKLIREIDAEARENAEKRARELVGLAVQRVAADHSSELTVTVVSLPNDEMKGRIIGREGRNIRTLETLTGVDLIIDDTPEAVVLSAFDPVRREVAKIALQKLIQDGRIHPARIEEMVEKAQKEVEARIREEGDAACFELGIHNLHPELVKLLGRLKFRTSYGQNVLKHSIEVAHLAGIMAAELGVNVEVAKRAGLLHDIGKAVDHEIEGSHVAIGVSLLRRYKEHPDVIHAMECHHGDVEPRSVEAHLVAAADAISAARPGARRETLETYIKRLEKLEALADSFDGVDKSYAIQAGREIRVMVKPEKIDDYAALKLTKEIARKIEEELEYPGQIRVVVVRETRAVEYAR.

Residues 3–23 form a helical membrane-spanning segment; it reads AILYVIVAVIALILGGAAGVA. A KH domain is found at 207 to 292; sequence TVTVVSLPND…EMVEKAQKEV (86 aa). The HD domain occupies 333–426; the sequence is VLKHSIEVAH…VAAADAISAA (94 aa).

Belongs to the RNase Y family.

It localises to the cell membrane. Endoribonuclease that initiates mRNA decay. The polypeptide is Ribonuclease Y (Symbiobacterium thermophilum (strain DSM 24528 / JCM 14929 / IAM 14863 / T)).